A 237-amino-acid polypeptide reads, in one-letter code: 7-cyano-7-deazaguanine synthase (237 aa).

Phe14–Leu24 contacts ATP. 4 residues coordinate Zn(2+): Cys202, Cys217, Cys220, and Cys223.

This sequence belongs to the QueC family. Zn(2+) serves as cofactor.

The catalysed reaction is 7-carboxy-7-deazaguanine + NH4(+) + ATP = 7-cyano-7-deazaguanine + ADP + phosphate + H2O + H(+). It participates in purine metabolism; 7-cyano-7-deazaguanine biosynthesis. In terms of biological role, catalyzes the ATP-dependent conversion of 7-carboxy-7-deazaguanine (CDG) to 7-cyano-7-deazaguanine (preQ(0)). This chain is 7-cyano-7-deazaguanine synthase, found in Rhodopseudomonas palustris (strain TIE-1).